The sequence spans 61 residues: Cytotoxin 2 (61 aa).

4 disulfides stabilise this stretch: Cys3/Cys22, Cys15/Cys39, Cys43/Cys54, and Cys55/Cys60.

The protein belongs to the three-finger toxin family. Short-chain subfamily. Type IB cytotoxin sub-subfamily. As to expression, expressed by the venom gland.

It is found in the secreted. Its function is as follows. This protein lyses red blood cells, has cytotoxic activity and induces hypotension, but is not neurotoxic. In addition, it induces direct paralysis of the muscle fiber. The sequence is that of Cytotoxin 2 from Hemachatus haemachatus (Rinkhals).